The following is a 287-amino-acid chain: Glycine--tRNA ligase alpha subunit (287 aa).

The protein belongs to the class-II aminoacyl-tRNA synthetase family. In terms of assembly, tetramer of two alpha and two beta subunits.

Its subcellular location is the cytoplasm. It carries out the reaction tRNA(Gly) + glycine + ATP = glycyl-tRNA(Gly) + AMP + diphosphate. In Campylobacter jejuni subsp. jejuni serotype O:23/36 (strain 81-176), this protein is Glycine--tRNA ligase alpha subunit.